Here is a 402-residue protein sequence, read N- to C-terminus: Imidazolonepropionase (402 aa).

Positions 66 and 68 each coordinate Fe(3+). 2 residues coordinate Zn(2+): H66 and H68. 4-imidazolone-5-propanoate-binding residues include R75, Y138, and H171. An N-formimidoyl-L-glutamate-binding site is contributed by Y138. Position 236 (H236) interacts with Fe(3+). H236 contacts Zn(2+). Q239 contacts 4-imidazolone-5-propanoate. D311 serves as a coordination point for Fe(3+). Position 311 (D311) interacts with Zn(2+). Residues N313 and G315 each coordinate N-formimidoyl-L-glutamate. T316 contributes to the 4-imidazolone-5-propanoate binding site.

Belongs to the metallo-dependent hydrolases superfamily. HutI family. It depends on Zn(2+) as a cofactor. Requires Fe(3+) as cofactor.

Its subcellular location is the cytoplasm. It carries out the reaction 4-imidazolone-5-propanoate + H2O = N-formimidoyl-L-glutamate. Its pathway is amino-acid degradation; L-histidine degradation into L-glutamate; N-formimidoyl-L-glutamate from L-histidine: step 3/3. Functionally, catalyzes the hydrolytic cleavage of the carbon-nitrogen bond in imidazolone-5-propanoate to yield N-formimidoyl-L-glutamate. It is the third step in the universal histidine degradation pathway. In Pseudomonas paraeruginosa (strain DSM 24068 / PA7) (Pseudomonas aeruginosa (strain PA7)), this protein is Imidazolonepropionase.